Reading from the N-terminus, the 122-residue chain is Large ribosomal subunit protein uL14 (122 aa).

It belongs to the universal ribosomal protein uL14 family. As to quaternary structure, part of the 50S ribosomal subunit. Forms a cluster with proteins L3 and L19. In the 70S ribosome, L14 and L19 interact and together make contacts with the 16S rRNA in bridges B5 and B8.

In terms of biological role, binds to 23S rRNA. Forms part of two intersubunit bridges in the 70S ribosome. The protein is Large ribosomal subunit protein uL14 of Delftia acidovorans (strain DSM 14801 / SPH-1).